The following is a 313-amino-acid chain: Carbamate kinase 2 (313 aa).

Belongs to the carbamate kinase family.

The protein resides in the cytoplasm. It carries out the reaction hydrogencarbonate + NH4(+) + ATP = carbamoyl phosphate + ADP + H2O + H(+). It participates in metabolic intermediate metabolism; carbamoyl phosphate degradation; CO(2) and NH(3) from carbamoyl phosphate: step 1/1. The polypeptide is Carbamate kinase 2 (arcC2) (Staphylococcus aureus (strain USA300)).